A 587-amino-acid polypeptide reads, in one-letter code: Ankyrin repeat and SOCS box protein 14 (587 aa).

11 ANK repeats span residues 82–112 (IGWIPLHKAAVQLNRKILEITLSASDPSLWE), 117–146 (NGETPLFLAVSSCLLENATFLLLNGCNPNA), 150–179 (EGNSPLLAAVLRDCYDMAALLINYGADVNL), 183–212 (NERTALHEAAKLGREDMVKLMLVSGAHPDP), 216–245 (YGFTPLALAAQSGHTEIMEMLLRKGKIFCL), 248–277 (DSSSILLEAASGGNPDAVALLLEYGADANI), 281–310 (SGHLPIHVAADRGHLLALKILIPVTDLAAI), 313–342 (SGISPVHCAAAGAHPQCLELLIQAGFDVNF), 355–384 (HRKSALYFAVSNSDLSSVKLLLSAGALPNQ), 385–414 (DPVNCLQIALRMGNYELISLLLRHGANVNY), and 416–449 (CRVNPLHFPSALQYTLKDEVMLRMLLNYGYDTER). In terms of domain architecture, SOCS box spans 521-576 (WSEIHFILTNPRSLKHLCRLKIRKCMGRLHLRCPVFMSFLPLPNRLKAYVLYKEYD).

This sequence belongs to the ankyrin SOCS box (ASB) family. In terms of assembly, interacts with MAPRE2; this interaction promotes MAPRE2 degradation.

It functions in the pathway protein modification; protein ubiquitination. Functionally, may be a substrate-recognition component of a SCF-like ECS (Elongin-Cullin-SOCS-box protein) E3 ubiquitin-protein ligase complex which mediates the ubiquitination and subsequent proteasomal degradation of target proteins. Plays a role in the inhibition of cardiomyocyte nuclear proliferation by mediating the ubiquitination and degradation of MAPRE2. The chain is Ankyrin repeat and SOCS box protein 14 (ASB14) from Homo sapiens (Human).